Consider the following 356-residue polypeptide: HORMA domain-containing protein 1 (356 aa).

Residues 24 to 225 (QQSLVLVKKL…TPFHSIKMNV (202 aa)) enclose the HORMA domain. Disordered stretches follow at residues 282 to 305 (ETQE…PKMD) and 333 to 356 (QLEF…SVPK). Over residues 288 to 298 (EQPHRHTKEDF) the composition is skewed to basic and acidic residues. The span at 347-356 (PKRRKVSVPK) shows a compositional bias: basic residues.

It is found in the nucleus. The protein resides in the chromosome. Plays a key role in meiotic progression by ensuring that sufficient numbers of processed DNA double-strand breaks (DSBs) are available for successful homology search, promoting synaptonemal-complex formation independently and playing key role in the male mid-pachytene checkpoint and the female meiotic prophase checkpoint. The sequence is that of HORMA domain-containing protein 1 (hormad1) from Danio rerio (Zebrafish).